A 217-amino-acid chain; its full sequence is Nascent polypeptide-associated complex subunit alpha (217 aa).

The segment at 1 to 45 is disordered; that stretch reads MPELTEIKSEAAPSTSAEAKPEDVRVEDDGSDSDSDGGMPGLEEA. Over residues 19-28 the composition is skewed to basic and acidic residues; sequence AKPEDVRVED. Residues 70–135 enclose the NAC-A/B domain; that stretch reads SRGEKKARKI…AKIEDLSQQA (66 aa). The interval 154–177 is disordered; sequence SVGATTSVAPIAEEDEEDVDDTGV. Residues 165–176 are compositionally biased toward acidic residues; that stretch reads AEEDEEDVDDTG. Residues 177-217 enclose the UBA domain; it reads VDEKDIELVITQANTTRAKAIKALKNNNNDIVNAIMELTML.

The protein belongs to the NAC-alpha family. In terms of assembly, part of the nascent polypeptide-associated complex (NAC), consisting of Nac-alpha and bicaudal (bic).

Its function is as follows. May promote appropriate targeting of ribosome-nascent polypeptide complexes. Required for correct localization of the osk/oskar protein to the posterior pole during embryonic development. The osk protein directs the recruitment of molecules responsible for posterior body patterning and germline formation in the embryo. In Drosophila melanogaster (Fruit fly), this protein is Nascent polypeptide-associated complex subunit alpha (Nacalpha).